The primary structure comprises 300 residues: 4-hydroxy-tetrahydrodipicolinate synthase (300 aa).

Thr53 is a binding site for pyruvate. Tyr141 acts as the Proton donor/acceptor in catalysis. The active-site Schiff-base intermediate with substrate is Lys169. Residue Thr211 coordinates pyruvate.

It belongs to the DapA family. As to quaternary structure, homotetramer; dimer of dimers.

It is found in the cytoplasm. It carries out the reaction L-aspartate 4-semialdehyde + pyruvate = (2S,4S)-4-hydroxy-2,3,4,5-tetrahydrodipicolinate + H2O + H(+). Its pathway is amino-acid biosynthesis; L-lysine biosynthesis via DAP pathway; (S)-tetrahydrodipicolinate from L-aspartate: step 3/4. Functionally, catalyzes the condensation of (S)-aspartate-beta-semialdehyde [(S)-ASA] and pyruvate to 4-hydroxy-tetrahydrodipicolinate (HTPA). The protein is 4-hydroxy-tetrahydrodipicolinate synthase of Rickettsia massiliae (strain Mtu5).